Reading from the N-terminus, the 943-residue chain is Isoleucine--tRNA ligase (943 aa).

The short motif at 59-69 (PYANGQIHLGH) is the 'HIGH' region element. Glutamate 577 serves as a coordination point for L-isoleucyl-5'-AMP. Positions 618 to 622 (KMSKS) match the 'KMSKS' region motif. Residue lysine 621 coordinates ATP. Cysteine 906, cysteine 909, cysteine 926, and cysteine 929 together coordinate Zn(2+).

This sequence belongs to the class-I aminoacyl-tRNA synthetase family. IleS type 1 subfamily. Monomer. Zn(2+) serves as cofactor.

It localises to the cytoplasm. It catalyses the reaction tRNA(Ile) + L-isoleucine + ATP = L-isoleucyl-tRNA(Ile) + AMP + diphosphate. Functionally, catalyzes the attachment of isoleucine to tRNA(Ile). As IleRS can inadvertently accommodate and process structurally similar amino acids such as valine, to avoid such errors it has two additional distinct tRNA(Ile)-dependent editing activities. One activity is designated as 'pretransfer' editing and involves the hydrolysis of activated Val-AMP. The other activity is designated 'posttransfer' editing and involves deacylation of mischarged Val-tRNA(Ile). This is Isoleucine--tRNA ligase from Xanthomonas oryzae pv. oryzae (strain MAFF 311018).